We begin with the raw amino-acid sequence, 351 residues long: ABC transporter nucleoside-binding protein BmpA (351 aa).

A signal peptide spans 1–21 (MKKRVIAVSAIALASVAVLAG). Cys22 carries the N-palmitoyl cysteine lipid modification. Cys22 carries S-diacylglycerol cysteine lipidation.

The protein belongs to the BMP lipoprotein family. The complex is composed of two ATP-binding proteins (NupA), two transmembrane proteins (NupB and NupC) and a solute-binding protein (BmpA).

It is found in the cell membrane. Its function is as follows. Part of an ABC transporter complex involved in the uptake of all common nucleosides. This Lactococcus lactis subsp. cremoris (strain MG1363) protein is ABC transporter nucleoside-binding protein BmpA.